The sequence spans 98 residues: Leydig cell tumor 10 kDa protein homolog (98 aa).

Disordered regions lie at residues 1-38 and 73-98; these read MAQG…RVIA and SLPK…KMPA. Residues 16-25 show a composition bias toward low complexity; it reads SKAAAAAASA. A compositionally biased stretch (basic residues) spans 28-38; that stretch reads RGPRKGGRVIA. A compositionally biased stretch (low complexity) spans 73–83; it reads SLPKKLALLKA.

It belongs to the UPF0390 family.

Functionally, may have a potential role in hypercalcemia of malignancy. This is Leydig cell tumor 10 kDa protein homolog from Bos taurus (Bovine).